We begin with the raw amino-acid sequence, 129 residues long: Small ribosomal subunit protein uS11 (129 aa).

Belongs to the universal ribosomal protein uS11 family. As to quaternary structure, part of the 30S ribosomal subunit. Interacts with proteins S7 and S18. Binds to IF-3.

Its function is as follows. Located on the platform of the 30S subunit, it bridges several disparate RNA helices of the 16S rRNA. Forms part of the Shine-Dalgarno cleft in the 70S ribosome. The chain is Small ribosomal subunit protein uS11 from Erwinia tasmaniensis (strain DSM 17950 / CFBP 7177 / CIP 109463 / NCPPB 4357 / Et1/99).